Consider the following 556-residue polypeptide: Formate--tetrahydrofolate ligase (556 aa).

Residue 65–72 (TPAGEGKS) coordinates ATP.

This sequence belongs to the formate--tetrahydrofolate ligase family.

It catalyses the reaction (6S)-5,6,7,8-tetrahydrofolate + formate + ATP = (6R)-10-formyltetrahydrofolate + ADP + phosphate. It participates in one-carbon metabolism; tetrahydrofolate interconversion. The polypeptide is Formate--tetrahydrofolate ligase (Streptococcus pneumoniae (strain JJA)).